We begin with the raw amino-acid sequence, 1525 residues long: Multidrug resistance-associated protein 1 (1525 aa).

The Extracellular portion of the chain corresponds to 1–33 (MGIESLCSADASEPFWDWNLTWHTENPDFTQCF). A helical transmembrane segment spans residues 34 to 54 (QNTVLVWVPCIYLWVCFPAYF). Over 55–74 (LYLRSHDRGYIQMSILNKAK) the chain is Cytoplasmic. A helical transmembrane segment spans residues 75-95 (TALGLILWIVCWADLFYSFWE). The Extracellular portion of the chain corresponds to 96–100 (RSQNI). The helical transmembrane segment at 101-121 (FRAPFFLISPTVLGITMLLAT) threads the bilayer. The Cytoplasmic portion of the chain corresponds to 122–133 (FLIQHERLKGVQ). The chain crosses the membrane as a helical span at residues 134–154 (SSGVMMIFWLISLLCATVIFR). Residues 155–172 (SKIMLALNTDTEVDAFRY) lie on the Extracellular side of the membrane. Residues 173–193 (VTFCTYFILLLVQLILSCFPE) form a helical membrane-spanning segment. Over 194–315 (KPPLFSEAVN…RSSEASLSKV (122 aa)) the chain is Cytoplasmic. Residues 316–336 (LYKTFGPYFLMSFLFKAAHDL) traverse the membrane as a helical segment. Positions 324-607 (FLMSFLFKAA…LPMVISSIVE (284 aa)) constitute an ABC transmembrane type-1 1 domain. Residues 337–362 (LMFTGPEILKLLINFVNNKSAPNWQG) are Extracellular-facing. The chain crosses the membrane as a helical span at residues 363–383 (YFYTGLLFVCACLQTLILHQY). The Cytoplasmic portion of the chain corresponds to 384-439 (FHICFVTGMRLKTAIVGVIYRKALVITNSARKTSTVGEIVNLMSVDAQRFMDLATY). A helical membrane pass occupies residues 440-460 (INMIWSAPLQVILALYLLWRN). Topologically, residues 461–463 (LGP) are extracellular. Residues 464–484 (SVLAGVAVMILLVPINAVMAM) form a helical membrane-spanning segment. At 485-546 (KTKTYQVAQM…VLKKSAYLAA (62 aa)) the chain is on the cytoplasmic side. A helical transmembrane segment spans residues 547–567 (MGTFTWVCAPFLVALSTFAVY). Topologically, residues 568–589 (VKVNKNNILDAQKAFVSLALFN) are extracellular. A helical transmembrane segment spans residues 590–610 (ILRFPLNILPMVISSIVEASV). Residues 611–961 (SLKRLRVFLS…VKATVYWEYM (351 aa)) lie on the Cytoplasmic side of the membrane. Residues 641–865 (IVVKNATFSW…DGAFAEFLRT (225 aa)) form the ABC transporter 1 domain. An ATP-binding site is contributed by 675-682 (GQVGCGKS). Polar residues-rich tracts occupy residues 871–882 (QSMESSDASSPS) and 908–928 (SNSS…STAE). Disordered stretches follow at residues 871-891 (QSME…PVEN) and 908-930 (SNSS…AELQ). A helical transmembrane segment spans residues 962 to 982 (KAIGLYISFLSVFLFMCNHIA). Positions 969 to 1250 (SFLSVFLFMC…LVRMTSDLET (282 aa)) constitute an ABC transmembrane type-1 2 domain. The Extracellular portion of the chain corresponds to 983 to 1019 (SLASNYWLSLWTDDPVVNGTQQYTNVRLGVYGALGIS). The helical transmembrane segment at 1020-1040 (QGIAVFGYSMAVSIGGIFASR) threads the bilayer. Residues 1041–1083 (HLHLDLLHNVLRSPMSFFERTPSGNLVSRFSKEIDTIDSTIPP) are Cytoplasmic-facing. Residues 1084–1104 (IIKMFMGSTFNVIGACIIILL) form a helical membrane-spanning segment. Position 1105 (A1105) is a topological domain, extracellular. The chain crosses the membrane as a helical span at residues 1106-1126 (TPIAAVVIPPLGLVYLLVQRF). Residues 1127–1197 (YVATSRQLKR…VANRWLAVRL (71 aa)) lie on the Cytoplasmic side of the membrane. A helical transmembrane segment spans residues 1198–1218 (EFVGNCIVLFAALFAVIARNK). The Extracellular segment spans residues 1219 to 1220 (LS). Residues 1221-1241 (PGLIGLSVSYSLQITAYLNWL) form a helical membrane-spanning segment. At 1242-1525 (VRMTSDLETN…YSMAKDSGLA (284 aa)) the chain is on the cytoplasmic side. The ABC transporter 2 domain occupies 1289 to 1521 (FRGFGLRYRE…KGLFYSMAKD (233 aa)). 1321-1328 (GRTGAGKS) is an ATP binding site.

This sequence belongs to the ABC transporter superfamily. ABCC family. Conjugate transporter (TC 3.A.1.208) subfamily.

It localises to the cell membrane. It carries out the reaction ATP + H2O + xenobioticSide 1 = ADP + phosphate + xenobioticSide 2.. The catalysed reaction is an S-substituted glutathione(in) + ATP + H2O = an S-substituted glutathione(out) + ADP + phosphate + H(+). The enzyme catalyses sphing-4-enine 1-phosphate(in) + ATP + H2O = sphing-4-enine 1-phosphate(out) + ADP + phosphate + H(+). It catalyses the reaction leukotriene C4(in) + ATP + H2O = leukotriene C4(out) + ADP + phosphate + H(+). It carries out the reaction 17beta-estradiol 17-O-(beta-D-glucuronate)(in) + ATP + H2O = 17beta-estradiol 17-O-(beta-D-glucuronate)(out) + ADP + phosphate + H(+). The catalysed reaction is 2',3'-cGAMP(in) + ATP + H2O = 2',3'-cGAMP(out) + ADP + phosphate + H(+). Mediates export of organic anions and drugs from the cytoplasm. Mediates ATP-dependent transport of glutathione and glutathione conjugates, leukotriene C4, estradiol-17-beta-o-glucuronide and other xenobiotics. Hydrolyzes ATP with low efficiency. Mediates ATP-dependent, GSH-independent cyclic GMP-AMP (cGAMP) export. Thus, by limiting intracellular cGAMP concentrations negatively regulates the cGAS-STING pathway. The sequence is that of Multidrug resistance-associated protein 1 from Gallus gallus (Chicken).